Here is a 495-residue protein sequence, read N- to C-terminus: Methyl viologen resistance protein SmvA (495 aa).

14 consecutive transmembrane segments (helical) span residues tryptophan 5 to leucine 25, leucine 44 to leucine 64, leucine 73 to threonine 93, tryptophan 96 to leucine 116, valine 135 to leucine 155, phenylalanine 158 to threonine 178, proline 192 to alanine 212, leucine 220 to isoleucine 240, isoleucine 260 to leucine 280, valine 299 to valine 319, valine 327 to phenylalanine 347, leucine 357 to methionine 377, isoleucine 391 to leucine 411, and valine 469 to leucine 489.

It belongs to the major facilitator superfamily. TCR/Tet family.

It localises to the cell inner membrane. Its function is as follows. Major efflux pump for acriflavine and other quaternary ammonium compounds (QACs). Also required for resistance to methyl viologen. This is Methyl viologen resistance protein SmvA (smvA) from Salmonella typhimurium (strain LT2 / SGSC1412 / ATCC 700720).